The sequence spans 74 residues: Dermaseptin-B3 (74 aa).

A signal peptide spans 1 to 22; the sequence is MAFLKKSVFLVLFLGLVSLSIC. Positions 23-43 are excised as a propeptide; the sequence is EEEKREEENEEKQEDDEQSEE.

In terms of tissue distribution, expressed by the skin glands.

The protein resides in the secreted. Possesses a potent antimicrobial activity against Gram-positive and Gram-negative bacteria. Probably acts by disturbing membrane functions with its amphipathic structure. The polypeptide is Dermaseptin-B3 (Phyllomedusa bicolor (Two-colored leaf frog)).